The following is a 283-amino-acid chain: Pantothenate synthetase (283 aa).

31 to 38 (MGALHDGH) contacts ATP. Histidine 38 serves as the catalytic Proton donor. Glutamine 62 lines the (R)-pantoate pocket. Glutamine 62 lines the beta-alanine pocket. Residue 148 to 151 (GKKD) participates in ATP binding. (R)-pantoate is bound at residue glutamine 154. ATP contacts are provided by residues valine 177 and 185–188 (KSSR).

Belongs to the pantothenate synthetase family. In terms of assembly, homodimer.

The protein resides in the cytoplasm. The catalysed reaction is (R)-pantoate + beta-alanine + ATP = (R)-pantothenate + AMP + diphosphate + H(+). The protein operates within cofactor biosynthesis; (R)-pantothenate biosynthesis; (R)-pantothenate from (R)-pantoate and beta-alanine: step 1/1. Its function is as follows. Catalyzes the condensation of pantoate with beta-alanine in an ATP-dependent reaction via a pantoyl-adenylate intermediate. This Staphylococcus aureus (strain MRSA252) protein is Pantothenate synthetase.